A 153-amino-acid chain; its full sequence is MGKISSLPTQLFKCCFCDFLKVKMHIMSSSHLFYLALCLLTFTSSATAGPETLCGAELVDALQFVCGDRGFYFNKPTGYGSSSRRAPQTGIVDECCFRSCDLRRLEMYCAPLKPAKSARSVRAQRHTDMPKAQKEVHLKNASRGSAGNKNYRM.

Residues 49–77 are b; it reads GPETLCGAELVDALQFVCGDRGFYFNKPT. Cystine bridges form between cysteine 54–cysteine 96, cysteine 66–cysteine 109, and cysteine 95–cysteine 100. The c stretch occupies residues 78–89; it reads GYGSSSRRAPQT. The a stretch occupies residues 90–110; it reads GIVDECCFRSCDLRRLEMYCA. The interval 111-118 is d; the sequence is PLKPAKSA. Positions 119–153 are cleaved as a propeptide — e peptide; that stretch reads RSVRAQRHTDMPKAQKEVHLKNASRGSAGNKNYRM. Residues 120–153 form a disordered region; it reads SVRAQRHTDMPKAQKEVHLKNASRGSAGNKNYRM. Basic and acidic residues predominate over residues 125–138; that stretch reads RHTDMPKAQKEVHL. Residues 142–153 show a composition bias toward polar residues; sequence SRGSAGNKNYRM.

Belongs to the insulin family. As to quaternary structure, forms a ternary complex with IGFR1 and ITGAV:ITGB3. Forms a ternary complex with IGFR1 and ITGA6:ITGB4. Forms a ternary complex with IGFBP3 and ALS.

The protein localises to the secreted. The insulin-like growth factors, isolated from plasma, are structurally and functionally related to insulin but have a much higher growth-promoting activity. May be a physiological regulator of [1-14C]-2-deoxy-D-glucose (2DG) transport and glycogen synthesis in osteoblasts. Stimulates glucose transport in bone-derived osteoblastic (PyMS) cells and is effective at much lower concentrations than insulin, not only regarding glycogen and DNA synthesis but also with regard to enhancing glucose uptake. May play a role in synapse maturation. Ca(2+)-dependent exocytosis of IGF1 is required for sensory perception of smell in the olfactory bulb. Acts as a ligand for IGF1R. Binds to the alpha subunit of IGF1R, leading to the activation of the intrinsic tyrosine kinase activity which autophosphorylates tyrosine residues in the beta subunit thus initiating a cascade of down-stream signaling events leading to activation of the PI3K-AKT/PKB and the Ras-MAPK pathways. Binds to integrins ITGAV:ITGB3 and ITGA6:ITGB4. Its binding to integrins and subsequent ternary complex formation with integrins and IGFR1 are essential for IGF1 signaling. Induces the phosphorylation and activation of IGFR1, MAPK3/ERK1, MAPK1/ERK2 and AKT1. As part of the MAPK/ERK signaling pathway, acts as a negative regulator of apoptosis in cardiomyocytes via promotion of STUB1/CHIP-mediated ubiquitination and degradation of ICER-type isoforms of CREM. The protein is Insulin-like growth factor 1 of Ailuropoda melanoleuca (Giant panda).